We begin with the raw amino-acid sequence, 68 residues long: DNA-directed RNA polymerase subunit Rpo10 (68 aa).

Zn(2+) contacts are provided by Cys7, Cys10, Cys44, and Cys45.

It belongs to the archaeal Rpo10/eukaryotic RPB10 RNA polymerase subunit family. Part of the RNA polymerase complex. It depends on Zn(2+) as a cofactor.

Its subcellular location is the cytoplasm. The catalysed reaction is RNA(n) + a ribonucleoside 5'-triphosphate = RNA(n+1) + diphosphate. Functionally, DNA-dependent RNA polymerase (RNAP) catalyzes the transcription of DNA into RNA using the four ribonucleoside triphosphates as substrates. The chain is DNA-directed RNA polymerase subunit Rpo10 from Methanococcus maripaludis (strain C6 / ATCC BAA-1332).